A 38-amino-acid polypeptide reads, in one-letter code: A2-specific pheromone (38 aa).

Cysteine methyl ester is present on C35. C35 carries the S-farnesyl cysteine lipid modification. The propeptide at 36–38 (LIA) is removed in mature form.

It is found in the cell membrane. Functionally, mating pheromone for A2 allele. This chain is A2-specific pheromone (MFA2), found in Mycosarcoma maydis (Corn smut fungus).